Consider the following 457-residue polypeptide: ATP-dependent protease ATPase subunit HslU (457 aa).

ATP contacts are provided by residues isoleucine 18 and 60–65 (GVGKTE). The disordered stretch occupies residues 142–171 (KQPGMGFFNPAAPEEQEEQPSADQSSTREK). The ATP site is built by aspartate 269, glutamate 335, and arginine 407.

It belongs to the ClpX chaperone family. HslU subfamily. As to quaternary structure, a double ring-shaped homohexamer of HslV is capped on each side by a ring-shaped HslU homohexamer. The assembly of the HslU/HslV complex is dependent on binding of ATP.

It is found in the cytoplasm. ATPase subunit of a proteasome-like degradation complex; this subunit has chaperone activity. The binding of ATP and its subsequent hydrolysis by HslU are essential for unfolding of protein substrates subsequently hydrolyzed by HslV. HslU recognizes the N-terminal part of its protein substrates and unfolds these before they are guided to HslV for hydrolysis. In Maridesulfovibrio salexigens (strain ATCC 14822 / DSM 2638 / NCIMB 8403 / VKM B-1763) (Desulfovibrio salexigens), this protein is ATP-dependent protease ATPase subunit HslU.